A 542-amino-acid polypeptide reads, in one-letter code: Anaerobic glycerol-3-phosphate dehydrogenase subunit A (542 aa).

10-38 (DVIIIGGGATGAGIARDCALRGLRVILVE) is an FAD binding site.

The protein belongs to the FAD-dependent glycerol-3-phosphate dehydrogenase family. Composed of a catalytic GlpA/B dimer and of membrane bound GlpC. FAD is required as a cofactor. The cofactor is FMN.

The protein resides in the cell inner membrane. The catalysed reaction is a quinone + sn-glycerol 3-phosphate = dihydroxyacetone phosphate + a quinol. The protein operates within polyol metabolism; glycerol degradation via glycerol kinase pathway; glycerone phosphate from sn-glycerol 3-phosphate (anaerobic route): step 1/1. Functionally, conversion of glycerol 3-phosphate to dihydroxyacetone. Uses fumarate or nitrate as electron acceptor. This Escherichia coli O157:H7 protein is Anaerobic glycerol-3-phosphate dehydrogenase subunit A (glpA).